Consider the following 660-residue polypeptide: F-box/LRR-repeat protein 5 (660 aa).

Residues 1–157 (MAPFPDEVDL…IKKKVIAQHC (157 aa)) are hemerythrin-like. Positions 15, 57, 58, 61, 80, 124, and 127 each coordinate Fe(3+). The region spanning 200-246 (SASICNLPPEVMLNIFSYLNPQDLCRCSQVNTKWAQLARTGSLWRHL) is the F-box domain. The interval 283-305 (YQEWDEDADIDESEETGEDDPSI) is disordered. A compositionally biased stretch (acidic residues) spans 285 to 303 (EWDEDADIDESEETGEDDP). LRR repeat units lie at residues 311–337 (EKEL…VLAY), 338–362 (SSAT…LDLT), 363–389 (QTDI…DLSG), 390–417 (CEKI…RLLK), 551–576 (IRDI…SLSG), 577–604 (CHQI…NLSG), 605–630 (CLNV…HFYY), and 631–649 (CDNI…QNLQ). Residues cysteine 631, cysteine 645, cysteine 655, and cysteine 656 each contribute to the [2Fe-2S] cluster site.

As to quaternary structure, part of a SCF (SKP1-cullin-F-box) protein ligase complex. It depends on [2Fe-2S] cluster as a cofactor. Ubiquitinated upon iron and oxygen depletion, leading to its degradation by the proteasome. Ubiquitination is regulated by the hemerythrin-like region that acts as an oxygen and iron sensor.

Its subcellular location is the cytoplasm. The protein localises to the perinuclear region. It is found in the nucleus. It functions in the pathway protein modification; protein ubiquitination. Functionally, component of some SCF (SKP1-cullin-F-box) protein ligase complex that plays a central role in iron homeostasis by promoting the ubiquitination and subsequent degradation of ireb2/irp2. Upon high iron and oxygen level, it specifically recognizes and binds ireb2/irp2, promoting its ubiquitination and degradation by the proteasome. The protein is F-box/LRR-repeat protein 5 (fbxl5) of Xenopus tropicalis (Western clawed frog).